Consider the following 496-residue polypeptide: Probable cytosol aminopeptidase (496 aa).

The Mn(2+) site is built by K258 and D263. K270 is a catalytic residue. Mn(2+) contacts are provided by D281, D340, and E342. The active site involves R344.

The protein belongs to the peptidase M17 family. It depends on Mn(2+) as a cofactor.

It is found in the cytoplasm. The enzyme catalyses Release of an N-terminal amino acid, Xaa-|-Yaa-, in which Xaa is preferably Leu, but may be other amino acids including Pro although not Arg or Lys, and Yaa may be Pro. Amino acid amides and methyl esters are also readily hydrolyzed, but rates on arylamides are exceedingly low.. It catalyses the reaction Release of an N-terminal amino acid, preferentially leucine, but not glutamic or aspartic acids.. Functionally, presumably involved in the processing and regular turnover of intracellular proteins. Catalyzes the removal of unsubstituted N-terminal amino acids from various peptides. This Helicobacter pylori (strain Shi470) protein is Probable cytosol aminopeptidase.